Consider the following 662-residue polypeptide: Polyunsaturated fatty acid lipoxygenase ALOX15 (662 aa).

The region spanning 2–114 (GLYRIRVSTG…VLSLPEGTGR (113 aa)) is the PLAT domain. In terms of domain architecture, Lipoxygenase spans 115-662 (TVGEDPQGLF…PSVVENSVAI (548 aa)). Residues His-360, His-365, His-540, His-544, and Ile-662 each contribute to the Fe cation site.

It belongs to the lipoxygenase family. As to quaternary structure, interacts with PEBP1; in response to IL13/interleukin-13, prevents the interaction of PEBP1 with RAF1 to activate the ERK signaling cascade. It depends on Fe cation as a cofactor. In terms of tissue distribution, detected in monocytes and eosinophils (at protein level). Expressed in airway epithelial cells.

Its subcellular location is the cytoplasm. The protein resides in the cytosol. The protein localises to the cell membrane. It is found in the lipid droplet. It carries out the reaction (5Z,8Z,11Z,14Z)-eicosatetraenoate + O2 = (12S)-hydroperoxy-(5Z,8Z,10E,14Z)-eicosatetraenoate. The catalysed reaction is (5Z,8Z,11Z,14Z)-eicosatetraenoate + O2 = (15S)-hydroperoxy-(5Z,8Z,11Z,13E)-eicosatetraenoate. It catalyses the reaction (9Z,12Z)-octadecadienoate + O2 = (13S)-hydroperoxy-(9Z,11E)-octadecadienoate. The enzyme catalyses (5Z,8Z,11Z,14Z)-eicosatetraenoate + 2 O2 = (14R,15S)-dihydroperoxy-(5Z,8Z,10E,12E)-eicosatetraenoate. It carries out the reaction (5Z,8Z,11Z,14Z)-eicosatetraenoate + 2 O2 = (8S,15S)-dihydroperoxy-(5Z,9E,11Z,13E)-eicosatetraenoate. The catalysed reaction is (14S,15R)-epoxy-(5Z,8Z,11Z)-eicosatrienoate + O2 = (8S)-hydroperoxy-(14S,15R)-epoxy-(5Z,9E,11Z)-eicosatrienoate. It catalyses the reaction (14S,15R)-epoxy-(5Z,8Z,11Z)-eicosatrienoate + O2 = (12S)-hydroperoxy-(14S,15R)-epoxy-(5Z,8Z,10E)-eicosatrienoate. The enzyme catalyses (14R,15S)-epoxy-(5Z,8Z,11Z)-eicosatrienoate + O2 = (5S)-hydroperoxy-(14R,15S)-epoxy-(6E,8Z,11Z)-eicosatrienoate. It carries out the reaction (14R,15S)-epoxy-(5Z,8Z,11Z)-eicosatrienoate + O2 = (12S)-hydroperoxy-(14R,15S)-epoxy-(5Z,8Z,10E)-eicosatrienoate. The catalysed reaction is (15R)-hydroperoxy-(5Z,8Z,11Z,13E)-eicosatetraenoate = 15-oxo-(5Z,8Z,11Z,13E)-eicosatetraenoate + H2O. It catalyses the reaction (15S)-hydroperoxy-(5Z,8Z,11Z,13E)-eicosatetraenoate = (14S,15S)-epoxy-(5Z,8Z,10E,12E)-eicosatetraenoate + H2O. The enzyme catalyses (12S)-hydroperoxy-(5Z,8Z,10E,14Z)-eicosatetraenoate = (8S)-hydroxy-(11S,12S)-epoxy-(5Z,9E,14Z)-eicosatrienoate. It carries out the reaction (4Z,7Z,10Z,13Z,16Z,19Z)-docosahexaenoate + O2 = (14S)-hydroperoxy-(4Z,7Z,10Z,12E,16Z,19Z)-docosahexaenoate. The catalysed reaction is (4Z,7Z,10Z,13Z,16Z,19Z)-docosahexaenoate + O2 = (17S)-hydroperoxy-(4Z,7Z,10Z,13Z,15E,19Z)-docosahexaenoate. It catalyses the reaction (7S)-hydroperoxy-(4Z,8E,10Z,13Z,16Z,19Z)-docosahexaenoate + O2 = (7S,14S)-dihydroperoxy-(4Z,8E,10Z,12E,16Z,19Z)-docosahexaenoate. The enzyme catalyses (7S)-hydroperoxy-(4Z,8E,10Z,13Z,16Z,19Z)-docosahexaenoate + O2 = (7S,17S)-dihydroperoxy-(4Z,8E,10Z,13Z,15E,19Z)-docosahexaenoate. It carries out the reaction (4Z,7Z,10Z,13Z,16Z,19Z)-docosahexaenoate + O2 = (11S)-hydroperoxy-(4Z,7Z,9E,13Z,16Z,19Z)-docosahexaenoate. The catalysed reaction is (7Z,10Z,13Z,16Z,19Z)-docosapentaenoate + O2 = 14-hydroperoxy-(7Z,10Z,12E,16Z,19Z)-docosapentaenoate. It catalyses the reaction (4Z,7Z,10Z,13Z,16Z)-docosapentaenoate + O2 = 14-hydroperoxy-(4Z,7Z,10Z,12E,16Z)-docosapentaenoate. The enzyme catalyses N-(5Z,8Z,11Z,14Z)-eicosatetraenoyl-taurine + O2 = N-(12S)-hydroperoxy-(5Z,8Z,10E,14Z)-eicosatetraenoyl-taurine. It carries out the reaction N-(5Z,8Z,11Z,14Z)-eicosatetraenoyl-gamma-aminobutanoate + O2 = N-(12S)-hydroperoxy-(5Z,8Z,10E,14Z)-eicosatetraenoyl-gamma-aminobutanoate. The catalysed reaction is N-(5Z,8Z,11Z,14Z)-eicosatetraenoyl-glycine + O2 = N-(12S)-hydroperoxy-(5Z,8Z,10E,14Z)-eicosatetraenoyl-glycine. It catalyses the reaction N-(5Z,8Z,11Z,14Z)-eicosatetraenoyl-L-alanine + O2 = N-(12S)-hydroperoxy-(5Z,8Z,10E,14Z)-eicosatetraenoyl-alanine. The enzyme catalyses N-(5Z,8Z,11Z,14Z)-eicosatetraenoyl-taurine + O2 = N-(15S)-hydroperoxy-(5Z,8Z,11Z,13E)-eicosatetraenoyl-taurine. It carries out the reaction N-(5Z,8Z,11Z,14Z)-eicosatetraenoyl-gamma-aminobutanoate + O2 = N-(15S)-hydroperoxy-(5Z,8Z,11Z,13E)-eicosatetraenoyl-gamma-aminobutanoate. The catalysed reaction is N-(5Z,8Z,11Z,14Z)-eicosatetraenoyl-glycine + O2 = N-(15S)-hydroperoxy-(5Z,8Z,11Z,13E)-eicosatetraenoyl-glycine. It catalyses the reaction N-(5Z,8Z,11Z,14Z)-eicosatetraenoyl-L-alanine + O2 = N-(15S)-hydroperoxy-(5Z,8Z,11Z,13E)-eicosatetraenoyl-alanine. It participates in lipid metabolism; hydroperoxy eicosatetraenoic acid biosynthesis. Activity is increased by binding phosphatidylinositol phosphates, especially phosphatidylinositol 3,4-bisphosphate and phosphatidylinositol 4,5-bisphosphate. Inactivated at 37 degrees Celsius by (13S)-hydroperoxy-(9Z,11E)-octadecadienoate. In terms of biological role, non-heme iron-containing dioxygenase that catalyzes the stereo-specific peroxidation of free and esterified polyunsaturated fatty acids generating a spectrum of bioactive lipid mediators. It inserts peroxyl groups at C12 or C15 of arachidonate ((5Z,8Z,11Z,14Z)-eicosatetraenoate) producing both 12-hydroperoxyeicosatetraenoate/12-HPETE and 15-hydroperoxyeicosatetraenoate/15-HPETE. It may then act on 12-HPETE to produce hepoxilins, which may show pro-inflammatory properties. Can also peroxidize linoleate ((9Z,12Z)-octadecadienoate) to 13-hydroperoxyoctadecadienoate/13-HPODE. May participate in the sequential oxidations of DHA ((4Z,7Z,10Z,13Z,16Z,19Z)-docosahexaenoate) to generate specialized pro-resolving mediators (SPMs)like resolvin D5 ((7S,17S)-diHPDHA) and (7S,14S)-diHPDHA, that actively down-regulate the immune response and have anti-aggregation properties with platelets. Can convert epoxy fatty acids to hydroperoxy-epoxides derivatives followed by an intramolecular nucleophilic substitution leading to the formation of monocyclic endoperoxides. Plays an important role during the maintenance of self-tolerance by peroxidizing membrane-bound phosphatidylethanolamine which can then signal the sorting process for clearance of apoptotic cells during inflammation and prevent an autoimmune response. In addition to its role in the immune and inflammatory responses, this enzyme may play a role in epithelial wound healing in the cornea through production of lipoxin A4 (LXA(4)) and docosahexaenoic acid-derived neuroprotectin D1 (NPD1; 10R,17S-HDHA), both lipid autacoids exhibit anti-inflammatory and neuroprotective properties. Furthermore, it may regulate actin polymerization which is crucial for several biological processes such as the phagocytosis of apoptotic cells. It is also implicated in the generation of endogenous ligands for peroxisome proliferator activated receptor (PPAR-gamma), hence modulating macrophage development and function. It may also exert a negative effect on skeletal development by regulating bone mass through this pathway. As well as participates in ER stress and downstream inflammation in adipocytes, pancreatic islets, and liver. Finally, it is also involved in the cellular response to IL13/interleukin-13. The chain is Polyunsaturated fatty acid lipoxygenase ALOX15 from Homo sapiens (Human).